The following is a 534-amino-acid chain: Membrane protein insertase YidC (534 aa).

5 consecutive transmembrane segments (helical) span residues isoleucine 7–methionine 27, alanine 319–phenylalanine 339, tyrosine 342–tryptophan 362, glycine 413–leucine 433, and valine 493–valine 513.

Belongs to the OXA1/ALB3/YidC family. Type 1 subfamily. Interacts with the Sec translocase complex via SecD. Specifically interacts with transmembrane segments of nascent integral membrane proteins during membrane integration.

The protein resides in the cell inner membrane. Required for the insertion and/or proper folding and/or complex formation of integral membrane proteins into the membrane. Involved in integration of membrane proteins that insert both dependently and independently of the Sec translocase complex, as well as at least some lipoproteins. Aids folding of multispanning membrane proteins. In Nitratidesulfovibrio vulgaris (strain ATCC 29579 / DSM 644 / CCUG 34227 / NCIMB 8303 / VKM B-1760 / Hildenborough) (Desulfovibrio vulgaris), this protein is Membrane protein insertase YidC.